The primary structure comprises 259 residues: Imidazole glycerol phosphate synthase subunit HisF (259 aa).

Active-site residues include aspartate 11 and aspartate 130.

It belongs to the HisA/HisF family. As to quaternary structure, heterodimer of HisH and HisF.

Its subcellular location is the cytoplasm. The catalysed reaction is 5-[(5-phospho-1-deoxy-D-ribulos-1-ylimino)methylamino]-1-(5-phospho-beta-D-ribosyl)imidazole-4-carboxamide + L-glutamine = D-erythro-1-(imidazol-4-yl)glycerol 3-phosphate + 5-amino-1-(5-phospho-beta-D-ribosyl)imidazole-4-carboxamide + L-glutamate + H(+). The protein operates within amino-acid biosynthesis; L-histidine biosynthesis; L-histidine from 5-phospho-alpha-D-ribose 1-diphosphate: step 5/9. Its function is as follows. IGPS catalyzes the conversion of PRFAR and glutamine to IGP, AICAR and glutamate. The HisF subunit catalyzes the cyclization activity that produces IGP and AICAR from PRFAR using the ammonia provided by the HisH subunit. The protein is Imidazole glycerol phosphate synthase subunit HisF of Syntrophobacter fumaroxidans (strain DSM 10017 / MPOB).